The following is an 808-amino-acid chain: Dynamin-like protein B (808 aa).

The 298-residue stretch at Phe43–Pro340 folds into the Dynamin-type G domain. The tract at residues Gly53–Ser60 is G1 motif. Gly53–Ser60 contributes to the GTP binding site. Residues Leu79–Arg80 form a G2 motif region. The tract at residues Glu150–Ser153 is G3 motif. GTP is bound by residues Glu150 to Val154 and Asn239 to His242. Residues Asn239–His242 are G4 motif. Residues Pro276–Ala279 are G5 motif. 2 disordered regions span residues Ser536–Ile565 and Ser665–His695. 2 stretches are compositionally biased toward low complexity: residues Ser552–Ile565 and Ser665–Asn694.

The protein belongs to the TRAFAC class dynamin-like GTPase superfamily. Dynamin/Fzo/YdjA family.

It localises to the cytoplasm. The catalysed reaction is GTP + H2O = GDP + phosphate + H(+). Its function is as follows. Involved in cytokinesis. May hydrolyze GTP. The chain is Dynamin-like protein B (dlpB) from Dictyostelium discoideum (Social amoeba).